The following is a 420-amino-acid chain: Dynein axonemal assembly factor 4 (420 aa).

The 85-residue stretch at 3–87 (LQVSDYSWQQ…KEAAMWETLS (85 aa)) folds into the CS domain. Residues 7–103 (DYSWQQTKTA…EMMQRIREKS (97 aa)) form a mediates interaction with ESR1 and STUB1 region. 3 TPR repeats span residues 290–323 (PEWL…NNKM), 324–357 (PLLY…LMPP), and 366–399 (MKAH…DPSN).

Interacts with ZMYND10. Interacts with STUB1. Interacts with ESR1 and ESR2. Interacts with DNAAF2. Interacts with CCT3, CCT4, CCT5 and CCT8. Interacts with DNAAF6/PIH1D3.

The protein localises to the nucleus. It is found in the cytoplasm. The protein resides in the cell projection. Its subcellular location is the neuron projection. It localises to the dynein axonemal particle. Involved in neuronal migration during development of the cerebral neocortex. May regulate the stability and proteasomal degradation of the estrogen receptors that play an important role in neuronal differentiation, survival and plasticity. Axonemal dynein assembly factor required for ciliary motility. This chain is Dynein axonemal assembly factor 4, found in Pan troglodytes (Chimpanzee).